A 119-amino-acid polypeptide reads, in one-letter code: Large ribosomal subunit protein bL20 (119 aa).

The protein belongs to the bacterial ribosomal protein bL20 family.

Functionally, binds directly to 23S ribosomal RNA and is necessary for the in vitro assembly process of the 50S ribosomal subunit. It is not involved in the protein synthesizing functions of that subunit. The sequence is that of Large ribosomal subunit protein bL20 from Caldicellulosiruptor bescii (strain ATCC BAA-1888 / DSM 6725 / KCTC 15123 / Z-1320) (Anaerocellum thermophilum).